We begin with the raw amino-acid sequence, 545 residues long: ATP synthase subunit alpha (545 aa).

An ATP-binding site is contributed by Gly173–Thr180.

Belongs to the ATPase alpha/beta chains family. F-type ATPases have 2 components, CF(1) - the catalytic core - and CF(0) - the membrane proton channel. CF(1) has five subunits: alpha(3), beta(3), gamma(1), delta(1), epsilon(1). CF(0) has three main subunits: a(1), b(2) and c(9-12). The alpha and beta chains form an alternating ring which encloses part of the gamma chain. CF(1) is attached to CF(0) by a central stalk formed by the gamma and epsilon chains, while a peripheral stalk is formed by the delta and b chains.

The protein localises to the cell membrane. The catalysed reaction is ATP + H2O + 4 H(+)(in) = ADP + phosphate + 5 H(+)(out). Produces ATP from ADP in the presence of a proton gradient across the membrane. The alpha chain is a regulatory subunit. The polypeptide is ATP synthase subunit alpha (Clavibacter michiganensis subsp. michiganensis (strain NCPPB 382)).